We begin with the raw amino-acid sequence, 121 residues long: Large ribosomal subunit protein bL12 (121 aa).

This sequence belongs to the bacterial ribosomal protein bL12 family. Homodimer. Part of the ribosomal stalk of the 50S ribosomal subunit. Forms a multimeric L10(L12)X complex, where L10 forms an elongated spine to which 2 to 4 L12 dimers bind in a sequential fashion. Binds GTP-bound translation factors.

Forms part of the ribosomal stalk which helps the ribosome interact with GTP-bound translation factors. Is thus essential for accurate translation. The polypeptide is Large ribosomal subunit protein bL12 (Psychromonas ingrahamii (strain DSM 17664 / CCUG 51855 / 37)).